The chain runs to 235 residues: 5'-methylthioadenosine/S-adenosylhomocysteine nucleosidase (235 aa).

The active-site Proton acceptor is the glutamate 13. Substrate-binding positions include glycine 79, methionine 154, and 175–176 (ME). Aspartate 199 (proton donor) is an active-site residue.

It belongs to the PNP/UDP phosphorylase family. MtnN subfamily.

The enzyme catalyses S-adenosyl-L-homocysteine + H2O = S-(5-deoxy-D-ribos-5-yl)-L-homocysteine + adenine. It carries out the reaction S-methyl-5'-thioadenosine + H2O = 5-(methylsulfanyl)-D-ribose + adenine. The catalysed reaction is 5'-deoxyadenosine + H2O = 5-deoxy-D-ribose + adenine. It participates in amino-acid biosynthesis; L-methionine biosynthesis via salvage pathway; S-methyl-5-thio-alpha-D-ribose 1-phosphate from S-methyl-5'-thioadenosine (hydrolase route): step 1/2. Functionally, catalyzes the irreversible cleavage of the glycosidic bond in both 5'-methylthioadenosine (MTA) and S-adenosylhomocysteine (SAH/AdoHcy) to adenine and the corresponding thioribose, 5'-methylthioribose and S-ribosylhomocysteine, respectively. Also cleaves 5'-deoxyadenosine, a toxic by-product of radical S-adenosylmethionine (SAM) enzymes, into 5-deoxyribose and adenine. The protein is 5'-methylthioadenosine/S-adenosylhomocysteine nucleosidase of Chromohalobacter salexigens (strain ATCC BAA-138 / DSM 3043 / CIP 106854 / NCIMB 13768 / 1H11).